Here is a 399-residue protein sequence, read N- to C-terminus: Elongation factor Tu (399 aa).

Residues lysine 10 to glutamate 209 enclose the tr-type G domain. Positions glycine 19 to threonine 26 are G1. Glycine 19–threonine 26 is a GTP binding site. Position 26 (threonine 26) interacts with Mg(2+). The interval glycine 60–alanine 64 is G2. Residues aspartate 81–glycine 84 form a G3 region. Residues aspartate 81 to histidine 85 and asparagine 136 to aspartate 139 each bind GTP. The tract at residues asparagine 136–aspartate 139 is G4. Positions serine 174–leucine 176 are G5.

It belongs to the TRAFAC class translation factor GTPase superfamily. Classic translation factor GTPase family. EF-Tu/EF-1A subfamily. Monomer.

The protein resides in the cytoplasm. It carries out the reaction GTP + H2O = GDP + phosphate + H(+). Functionally, GTP hydrolase that promotes the GTP-dependent binding of aminoacyl-tRNA to the A-site of ribosomes during protein biosynthesis. The polypeptide is Elongation factor Tu (Helicobacter pylori (strain ATCC 700392 / 26695) (Campylobacter pylori)).